The following is a 450-amino-acid chain: Sulfide:quinone oxidoreductase, mitochondrial (450 aa).

Residues 53–54, glutamate 75, glutamine 83, and valine 118 contribute to the FAD site; that span reads AG. N6-acetyllysine is present on residues lysine 134 and lysine 173. Cysteine 201 acts as the Cysteine persulfide intermediate in catalysis. Residues cysteine 201 and cysteine 379 are joined by a disulfide bond. Aspartate 336 provides a ligand contact to FAD. Serine 343 is modified (phosphoserine). 344–347 contacts FAD; it reads KTAA. Cysteine 379 serves as the catalytic Cysteine persulfide intermediate.

Belongs to the SQRD family. It depends on FAD as a cofactor.

Its subcellular location is the mitochondrion. It catalyses the reaction ubiquinone-10 + hydrogen sulfide + sulfite + 2 H(+) = ubiquinol-10 + thiosulfate. The catalysed reaction is a quinone + hydrogen sulfide + glutathione + H(+) = S-sulfanylglutathione + a quinol. The enzyme catalyses ubiquinone-10 + hydrogen sulfide + glutathione + H(+) = S-sulfanylglutathione + ubiquinol-10. In terms of biological role, catalyzes the oxidation of hydrogen sulfide with the help of a quinone, such as ubiquinone-10, giving rise to thiosulfate and ultimately to sulfane (molecular sulfur) atoms. Requires an additional electron acceptor; can use sulfite, sulfide or cyanide (in vitro). It is believed the in vivo electron acceptor is glutathione. In Mus musculus (Mouse), this protein is Sulfide:quinone oxidoreductase, mitochondrial.